We begin with the raw amino-acid sequence, 323 residues long: Pantothenate kinase (323 aa).

Polar residues predominate over residues 1–12 (MAEQNAASTTGV). The tract at residues 1–24 (MAEQNAASTTGVKPSPRTPDFSPY) is disordered. Position 108-115 (108-115 (GSVAVGKS)) interacts with ATP.

Belongs to the prokaryotic pantothenate kinase family.

It localises to the cytoplasm. It carries out the reaction (R)-pantothenate + ATP = (R)-4'-phosphopantothenate + ADP + H(+). The protein operates within cofactor biosynthesis; coenzyme A biosynthesis; CoA from (R)-pantothenate: step 1/5. The sequence is that of Pantothenate kinase from Corynebacterium glutamicum (strain R).